The following is a 130-amino-acid chain: Glycine cleavage system H protein (130 aa).

One can recognise a Lipoyl-binding domain in the interval 22–103; sequence KAYIGISDCA…PYGSWIIAVE (82 aa). An N6-lipoyllysine modification is found at Lys63.

The protein belongs to the GcvH family. The glycine cleavage system is composed of four proteins: P, T, L and H. It depends on (R)-lipoate as a cofactor.

Functionally, the glycine cleavage system catalyzes the degradation of glycine. The H protein shuttles the methylamine group of glycine from the P protein to the T protein. This chain is Glycine cleavage system H protein, found in Clostridium botulinum (strain Kyoto / Type A2).